The chain runs to 644 residues: Uromodulin (644 aa).

The first 26 residues, 1–26 (MGQLLSLTWLLLVMVVTPWFTVAGAN), serve as a signal peptide directing secretion. One can recognise an EGF-like 1 domain in the interval 30–66 (EARRCSECHDNATCVLDGVVTTCSCQAGFTGDGLVCE). Intrachain disulfides connect cysteine 34-cysteine 43, cysteine 37-cysteine 52, cysteine 54-cysteine 65, cysteine 71-cysteine 84, cysteine 79-cysteine 93, cysteine 95-cysteine 107, cysteine 113-cysteine 127, cysteine 121-cysteine 136, cysteine 138-cysteine 149, cysteine 151-cysteine 162, cysteine 156-cysteine 173, cysteine 177-cysteine 270, cysteine 198-cysteine 285, cysteine 220-cysteine 258, cysteine 226-cysteine 290, cysteine 251-cysteine 259, cysteine 300-cysteine 309, cysteine 303-cysteine 318, cysteine 320-cysteine 350, cysteine 338-cysteine 428, and cysteine 369-cysteine 392. The N-linked (GlcNAc...) asparagine glycan is linked to asparagine 40. The region spanning 67-108 (DIDECATPWTHNCSNSICMNTLGSYECSCQDGFRLTPGLGCI) is the EGF-like 2; calcium-binding domain. A glycan (N-linked (GlcNAc...) asparagine) is linked at asparagine 78. Positions 109 to 150 (DVNECTEQGLSNCHSLATCVNTEGSYSCVCPKGYRGDGWYCE) constitute an EGF-like 3; calcium-binding domain. Residues 151–174 (CSPGFCEPGLDCLPQGPSGKLVCQ) form a beta hairpin region. The tract at residues 175 to 294 (DPCNVYETLT…CNLAYCTDPS (120 aa)) is D10C. Asparagine 235 carries N-linked (GlcNAc...) asparagine glycosylation. N-linked (GlcNAc...) asparagine glycosylation occurs at asparagine 278. The EGF-like 4 domain maps to 295-326 (SVEGTCEECGVDEDCVSDNGRWRCQCKQDFNV). Asparagine 325 carries N-linked (GlcNAc...) asparagine glycosylation. The segment at 337-432 (ECEANEIKIS…RINFECSYPL (96 aa)) is ZP-N. The region spanning 337–592 (ECEANEIKIS…PTCSGTRYRS (256 aa)) is the ZP domain. N-linked (GlcNAc...) asparagine glycosylation is found at asparagine 399 and asparagine 450. The segment at 433 to 456 (DMKVSLKTSLQPMVSALNISLGGT) is flexible ZP-N/ZP-C linker; important for secretion and polymerization into filaments. Residues 457–467 (GKFTVQMALFQ) form an internal hydrophobic patch (IHP) region. A ZP-C region spans residues 457–592 (GKFTVQMALF…PTCSGTRYRS (136 aa)). 3 disulfide bridges follow: cysteine 509-cysteine 569, cysteine 530-cysteine 585, and cysteine 574-cysteine 581. N-linked (GlcNAc...) asparagine glycosylation is present at asparagine 516. The essential for cleavage by HPN stretch occupies residues 589-592 (RYRS). The interval 601–609 (VLNLGPITR) is external hydrophobic patch (EHP); regulates polymerization into filaments. The GPI-anchor amidated serine moiety is linked to residue serine 615. Positions 616 to 644 (VSKAASSNLGFLSIWLLLFLSATLTLMVH) are cleaved as a propeptide — removed in mature form.

As to quaternary structure, homodimer that then polymerizes into long filaments. The filaments can additionally assemble laterally to form a sheet. The filaments consist of a zigzag-shaped backbone with laterally protruding arms which interact with bacterial adhesin fimH. Two fimH molecules can bind to a single UMOD monomer. In terms of processing, N-glycosylated. Post-translationally, proteolytically cleaved at a conserved C-terminal proteolytic cleavage site to generate the secreted form found in urine. This cleavage is catalyzed by HPN. In terms of tissue distribution, expression restricted to the thick ascending limb of the loop of Henle (TALH).

Its subcellular location is the apical cell membrane. It localises to the basolateral cell membrane. The protein localises to the cell projection. It is found in the cilium membrane. The protein resides in the secreted. Functions in biogenesis and organization of the apical membrane of epithelial cells of the thick ascending limb of Henle's loop (TALH), where it promotes formation of complex filamentous gel-like structure that may play a role in the water barrier permeability. May serve as a receptor for binding and endocytosis of cytokines (IL-1, IL-2) and TNF. Facilitates neutrophil migration across renal epithelia. Its function is as follows. In the urine, may contribute to colloid osmotic pressure, retards passage of positively charged electrolytes, and inhibits formation of liquid containing supersaturated salts and subsequent formation of salt crystals. Protects against urinary tract infections by binding to type 1 fimbriated E.coli. Binds to bacterial adhesin fimH which mediates the stable formation of bacterial aggregates, prevents the binding of E.coli to uroplakins UPK1A and UPK1B which act as urothelial receptors for type I fimbriae, and allows for pathogen clearance through micturation. Also promotes aggregation of other bacteria including K.pneumoniae, P.aeruginosa and S.mitis and so may also protect against other uropathogens. The protein is Uromodulin (Umod) of Rattus norvegicus (Rat).